A 752-amino-acid polypeptide reads, in one-letter code: Photosystem I P700 chlorophyll a apoprotein A1 (752 aa).

Helical transmembrane passes span 73 to 96 (IFSAHFGQLAIIFLWVSQAYFHGA), 159 to 182 (LYWTAMGGLMMSALMVFAGWFHYH), 198 to 222 (MNHHLAGLLGLGCLSWSGHQIHISL), 294 to 312 (TAHHHLALAVLFIFAGHMY), 349 to 372 (WHAQLAINLAMMGSLSIIVAHHMY), 388 to 414 (LSLFTHHMWIGGFCVCGAAAHGAIFMV), 436 to 458 (AIISHLNWVCIFLGTHSFGLYIH), and 533 to 551 (FLVHHIHAFTIHVTVLILL). [4Fe-4S] cluster is bound by residues Cys575 and Cys584. 2 helical membrane passes run 591–612 (HIFLGLFWMYNCISVVIFHFSW) and 666–688 (LSAYGIIFLGAHFIWAFSLMFLF). His677 provides a ligand contact to chlorophyll a'. Residues Met685 and Tyr693 each contribute to the chlorophyll a site. Trp694 is a binding site for phylloquinone. The chain crosses the membrane as a helical span at residues 726–746 (AVGLAHYLLGGIGTTWSFFLA).

Belongs to the PsaA/PsaB family. As to quaternary structure, the PsaA/B heterodimer binds the P700 chlorophyll special pair and subsequent electron acceptors. PSI consists of a core antenna complex that captures photons, and an electron transfer chain that converts photonic excitation into a charge separation. The eukaryotic PSI reaction center is composed of at least 11 subunits. P700 is a chlorophyll a/chlorophyll a' dimer, A0 is one or more chlorophyll a, A1 is one or both phylloquinones and FX is a shared 4Fe-4S iron-sulfur center. is required as a cofactor.

It is found in the plastid. It localises to the chloroplast thylakoid membrane. The catalysed reaction is reduced [plastocyanin] + hnu + oxidized [2Fe-2S]-[ferredoxin] = oxidized [plastocyanin] + reduced [2Fe-2S]-[ferredoxin]. PsaA and PsaB bind P700, the primary electron donor of photosystem I (PSI), as well as the electron acceptors A0, A1 and FX. PSI is a plastocyanin/cytochrome c6-ferredoxin oxidoreductase, converting photonic excitation into a charge separation, which transfers an electron from the donor P700 chlorophyll pair to the spectroscopically characterized acceptors A0, A1, FX, FA and FB in turn. Oxidized P700 is reduced on the lumenal side of the thylakoid membrane by plastocyanin or cytochrome c6. This chain is Photosystem I P700 chlorophyll a apoprotein A1, found in Emiliania huxleyi (Coccolithophore).